We begin with the raw amino-acid sequence, 71 residues long: Protein SlyX homolog (71 aa).

It belongs to the SlyX family.

The polypeptide is Protein SlyX homolog (Thioalkalivibrio sulfidiphilus (strain HL-EbGR7)).